The following is a 140-amino-acid chain: Protein ripply1 (140 aa).

A WRPW motif; required for gro2-binding motif is present at residues 28–31; it reads WRPW. Positions 71–106 are ripply homology domain; the sequence is HPVRLYWPRSKSFDYLFSDGEALLRNFPVQATINFY. The disordered stretch occupies residues 107-126; the sequence is DESDSEDEEESCDEDDESDV.

This sequence belongs to the ripply family. Interacts with gro2 via the WRPW motif. As to expression, expressed in the embryonic anterior presomitic mesoderm and in newly formed somites.

It is found in the nucleus. In terms of biological role, plays a role in somitogenesis. Essential for transcriptional repression of the segmental patterning genes, thus terminating the segmentation program in the presomitic mesoderm, and also required for the maintenance of rostrocaudal polarity in somites. The chain is Protein ripply1 from Danio rerio (Zebrafish).